Here is a 193-residue protein sequence, read N- to C-terminus: Ribosome maturation factor RimM (193 aa).

A PRC barrel domain is found at 112–193; that stretch reads VDEYYWIDLI…CITVDWGLDF (82 aa).

Belongs to the RimM family. In terms of assembly, binds ribosomal protein uS19.

It is found in the cytoplasm. Its function is as follows. An accessory protein needed during the final step in the assembly of 30S ribosomal subunit, possibly for assembly of the head region. Essential for efficient processing of 16S rRNA. May be needed both before and after RbfA during the maturation of 16S rRNA. It has affinity for free ribosomal 30S subunits but not for 70S ribosomes. In Methylibium petroleiphilum (strain ATCC BAA-1232 / LMG 22953 / PM1), this protein is Ribosome maturation factor RimM.